The following is a 325-amino-acid chain: tRNA(Ile)-lysidine synthase (325 aa).

Position 34-39 (34-39) interacts with ATP; it reads SGGADS.

It belongs to the tRNA(Ile)-lysidine synthase family.

It localises to the cytoplasm. The catalysed reaction is cytidine(34) in tRNA(Ile2) + L-lysine + ATP = lysidine(34) in tRNA(Ile2) + AMP + diphosphate + H(+). Functionally, ligates lysine onto the cytidine present at position 34 of the AUA codon-specific tRNA(Ile) that contains the anticodon CAU, in an ATP-dependent manner. Cytidine is converted to lysidine, thus changing the amino acid specificity of the tRNA from methionine to isoleucine. The polypeptide is tRNA(Ile)-lysidine synthase (Rhodococcus jostii (strain RHA1)).